The following is a 207-amino-acid chain: Small ribosomal subunit protein uS4 (207 aa).

The segment at 26–53 is disordered; that stretch reads KPFDVKTKKHAKAPGQHGQARGKQSEYS. The S4 RNA-binding domain maps to 97 to 159; sequence SRLDNVVYRM…AKQQLRIKNA (63 aa).

Belongs to the universal ribosomal protein uS4 family. In terms of assembly, part of the 30S ribosomal subunit. Contacts protein S5. The interaction surface between S4 and S5 is involved in control of translational fidelity.

Functionally, one of the primary rRNA binding proteins, it binds directly to 16S rRNA where it nucleates assembly of the body of the 30S subunit. With S5 and S12 plays an important role in translational accuracy. This Acinetobacter baylyi (strain ATCC 33305 / BD413 / ADP1) protein is Small ribosomal subunit protein uS4.